Here is a 478-residue protein sequence, read N- to C-terminus: Pentraxin-4 (478 aa).

The N-terminal stretch at 1–25 is a signal peptide; the sequence is MGCSWRKTLSFFLVFVPIYLHGASS. Residues N67 and N91 are each glycosylated (N-linked (GlcNAc...) asparagine). Residues 208-222 show a composition bias toward basic and acidic residues; that stretch reads RDRQELRAASEHRGP. Residues 208 to 262 are disordered; it reads RDRQELRAASEHRGPPQDSSAPLQGRREPPASGSHRVLSGTAPKDPRQQAWSPQV. The Pentraxin (PTX) domain occupies 269 to 473; the sequence is VGPTLVFPNA…GFVQGANCTC (205 aa). A disulfide bond links C300 and C364. 5 residues coordinate Ca(2+): D322, N323, E406, Q407, and D408.

It depends on Ca(2+) as a cofactor. In terms of tissue distribution, widely expressed at low levels with highest levels in small intestine, testis and brain. Very low expression in endothelial cells, monocytes, neutrophils and lymphocytes. Isoform 1 is not expressed in small intestine.

The protein localises to the secreted. In Homo sapiens (Human), this protein is Pentraxin-4 (PTX4).